The sequence spans 467 residues: Putative ankyrin repeat protein R911 (467 aa).

ANK repeat units follow at residues 38–70 (IKTD…PIIV), 79–108 (TLNK…DIRA), 109–138 (GNDY…DIRA), 140–168 (NDYA…NIRA), 170–198 (NDHA…DIRS), 199–228 (DNDY…NIRS), 229–258 (DNDY…DIKS), 260–288 (NDYA…NIRV), 289–318 (NNNY…DIIA), 320–348 (NNFA…DIKS), 350–378 (NDYA…DIRV), 379–408 (ENDY…DIRS), 410–438 (NDYA…DIKA), and 440–467 (DDYA…AVLS).

In Acanthamoeba polyphaga mimivirus (APMV), this protein is Putative ankyrin repeat protein R911.